The chain runs to 1058 residues: MIKEITAKYNAEQIEKKVTQFWEDSDAYRKTRERRKTGKRLFFVDGPPYTTGHIHLGTAWNKIIKDTILRYYSMNNRYILERPGWDMHGLPIEVRVEGVLGFKSKKDIESFGVENFIEKCKEFAITQKQAMTEQFQRLGVWMQWPEPYMTLKDDYIEAAWWTLKQAHEKDLLEVGKRSVNWCPRCETAIADSEVEYSERTDPSIYVKFKVKGEENTFIVIWTTTPWTIPANVAVAVHPAYEYSKFRAIRQDGSEEILIAATELIKNVLKQGRYADFKVLETMLGEELTKLEYESPVGDLVPIQNEIKHGVYLADFVTVENTGCVHIAPGHGMDDFNLGVKHKLPILCPVGSNGAYTEEAGEYAGKNVREANPIVIEDLKARNRLLAEGTVTHRYGHCWRCKTPIIYLATEQWFLKITEIKEKMLEEIDAVDWYPDWAGSARFRTWVEGARDWCISRQRYWGIPLPVWKCKKCGKLEVIGTKAELLEKAGLSGDIELHRPYVDRVTVPCECGGEKKRVEDVFDVWFDSAVASWATLKFPQTHDQFDEWWPADFVTEGHDQTRGWFYSQLGASMVGFGRAPYKSVLMHGFTLDAGGKKMSKSLGNVVSPLDIIDRLGADTLRAYVLSSSAPWEDLKYNLEEVETVHRSINILWNVFRFPLPYMALDNFDPMQVSLDSVKDALREEDRWILSRAQSVIKAVNEAMSGYLLHKAVREILEFALEDLSRWYIQLIRPRTWTEADDPDKLAAYCVLYEVYVTITKLISPFMPYLAEEMYQNLIRNVDPNAPESVHMCDWPKVNDTYLDPELEVAMDTVRSIVEAASNARQKAGRKLRWPVSRIIVSPESEAAAKAVNRLGSVLMDQTNSKAIVLTGVGKSWDELGLEVIPDPGKIGPVFKKDAGRVIPALQKVEGFTLKKAFAETGEFELTLADGTTVPVTSGMANFKETLPEGTASAESDAGLVYVDANLTPELEAEGYAREVIRRLQDMRKELDLVVDENIRVSVRIEAEKVLALVETLKDLIAEEVRADVFDLGSSIEVSGTLVKDWDVEGTAMKMGIAKK.

Residues 48–58 (PYTTGHIHLGT) carry the 'HIGH' region motif. Positions 596-600 (KMSKS) match the 'KMSKS' region motif. ATP is bound at residue Lys599.

Belongs to the class-I aminoacyl-tRNA synthetase family. IleS type 2 subfamily. In terms of assembly, monomer. Zn(2+) serves as cofactor.

The protein resides in the cytoplasm. It carries out the reaction tRNA(Ile) + L-isoleucine + ATP = L-isoleucyl-tRNA(Ile) + AMP + diphosphate. In terms of biological role, catalyzes the attachment of isoleucine to tRNA(Ile). As IleRS can inadvertently accommodate and process structurally similar amino acids such as valine, to avoid such errors it has two additional distinct tRNA(Ile)-dependent editing activities. One activity is designated as 'pretransfer' editing and involves the hydrolysis of activated Val-AMP. The other activity is designated 'posttransfer' editing and involves deacylation of mischarged Val-tRNA(Ile). The polypeptide is Isoleucine--tRNA ligase (Methanosarcina acetivorans (strain ATCC 35395 / DSM 2834 / JCM 12185 / C2A)).